The following is a 506-amino-acid chain: ATP synthase subunit alpha (506 aa).

171–178 (GDRQTGKT) lines the ATP pocket.

It belongs to the ATPase alpha/beta chains family. F-type ATPases have 2 components, CF(1) - the catalytic core - and CF(0) - the membrane proton channel. CF(1) has five subunits: alpha(3), beta(3), gamma(1), delta(1), epsilon(1). CF(0) has four main subunits: a(1), b(1), b'(1) and c(9-12).

The protein resides in the cellular thylakoid membrane. The enzyme catalyses ATP + H2O + 4 H(+)(in) = ADP + phosphate + 5 H(+)(out). Functionally, produces ATP from ADP in the presence of a proton gradient across the membrane. The alpha chain is a regulatory subunit. In Trichormus variabilis (strain ATCC 29413 / PCC 7937) (Anabaena variabilis), this protein is ATP synthase subunit alpha.